A 382-amino-acid chain; its full sequence is Fimbrial usher domain-containing protein YdeT (382 aa).

The sequence is that of Fimbrial usher domain-containing protein YdeT (ydeT) from Escherichia coli O157:H7.